We begin with the raw amino-acid sequence, 185 residues long: Elongation factor P (185 aa).

It belongs to the elongation factor P family.

The protein resides in the cytoplasm. It functions in the pathway protein biosynthesis; polypeptide chain elongation. Involved in peptide bond synthesis. Stimulates efficient translation and peptide-bond synthesis on native or reconstituted 70S ribosomes in vitro. Probably functions indirectly by altering the affinity of the ribosome for aminoacyl-tRNA, thus increasing their reactivity as acceptors for peptidyl transferase. The chain is Elongation factor P from Trichormus variabilis (strain ATCC 29413 / PCC 7937) (Anabaena variabilis).